The following is a 322-amino-acid chain: Mitochondrial thiamine pyrophosphate carrier 1 (322 aa).

Solcar repeat units follow at residues 12-111, 122-208, and 215-310; these read GSKT…VTLG, PAAA…LRLP, and PFGS…VLGI. 6 helical membrane passes run 18–38, 92–108, 128–148, 180–200, 221–241, and 285–302; these read MIAG…LDVV, LMYV…YRSV, FIAG…LDLL, FFQG…IFFA, ASAG…FDLI, and GLTV…VTMW.

It belongs to the mitochondrial carrier (TC 2.A.29) family.

Its subcellular location is the mitochondrion inner membrane. Its function is as follows. Mitochondrial transporter that mediates uptake of thiamine pyrophosphate (ThPP) into mitochondria. In Botryotinia fuckeliana (strain B05.10) (Noble rot fungus), this protein is Mitochondrial thiamine pyrophosphate carrier 1 (tpc1).